The primary structure comprises 164 residues: CASP-like protein 1C1 (164 aa).

Topologically, residues 1–15 (MGDVEIPPLVKQIVR) are cytoplasmic. Residues 16–36 (GLRGLAFLATILATSFMAASH) form a helical membrane-spanning segment. The Extracellular segment spans residues 37-56 (ERAIFPFDYKADYTDLMLFK). A helical membrane pass occupies residues 57-77 (AFLGANIAASLYSFFFVCLPP). The Cytoplasmic portion of the chain corresponds to 78–83 (KSLLWR). The chain crosses the membrane as a helical span at residues 84–104 (LAIVLDVIMFGLLVAMDSAAI). Topologically, residues 105-132 (AAAYLHKHGDSQAFWPPICSQVPTYCYR) are extracellular. A helical transmembrane segment spans residues 133–153 (VILAISIGFGGVFMFLLIIII). Over 154–164 (SISVILNPLLV) the chain is Cytoplasmic.

The protein belongs to the Casparian strip membrane proteins (CASP) family. Homodimer and heterodimers.

The protein localises to the cell membrane. This Populus trichocarpa (Western balsam poplar) protein is CASP-like protein 1C1.